We begin with the raw amino-acid sequence, 512 residues long: Ascofuranone/ascochlorin biosynthesis clusters transcription regulator (512 aa).

Positions 14–49 (CDRCHSQKLRCPRSVEPEKANPEEPCSRCRKAGVPC) form a DNA-binding region, zn(2)-C6 fungal-type. 3 disordered regions span residues 54-87 (RGKV…PYDI), 118-148 (GSGS…DPLM), and 325-351 (GCTR…DGSI). Positions 56-70 (KVGRPSKATKKKSAR) are enriched in basic residues. 2 stretches are compositionally biased toward low complexity: residues 118–127 (GSGSVTTSAS) and 327–342 (TRSS…GSSM).

It localises to the nucleus. In terms of biological role, transcription factor that regulates the expression of the asc-1 and asc-2 gene clusters that mediate the biosynthesis of both ascochlorin and ascofuranone, a strong inhibitor of cyanide-insensitive alternative oxidases and a promising drug candidate against African trypanosomiasis. Binds the 5'-CGGYGNNTTW-3' motif within promoters of the target genes. This chain is Ascofuranone/ascochlorin biosynthesis clusters transcription regulator, found in Acremonium egyptiacum (Oospora egyptiaca).